Here is a 211-residue protein sequence, read N- to C-terminus: Ribosomal RNA small subunit methyltransferase G (211 aa).

Residues G74, L79, 125–126 (AE), and R140 each bind S-adenosyl-L-methionine.

It belongs to the methyltransferase superfamily. RNA methyltransferase RsmG family.

The protein resides in the cytoplasm. Its function is as follows. Specifically methylates the N7 position of guanine in position 518 of 16S rRNA. This chain is Ribosomal RNA small subunit methyltransferase G, found in Clavibacter sepedonicus (Clavibacter michiganensis subsp. sepedonicus).